The chain runs to 460 residues: V-type ATP synthase beta chain (460 aa).

It belongs to the ATPase alpha/beta chains family.

Produces ATP from ADP in the presence of a proton gradient across the membrane. The V-type beta chain is a regulatory subunit. This Acetivibrio thermocellus (strain ATCC 27405 / DSM 1237 / JCM 9322 / NBRC 103400 / NCIMB 10682 / NRRL B-4536 / VPI 7372) (Clostridium thermocellum) protein is V-type ATP synthase beta chain.